Consider the following 354-residue polypeptide: Methylthioribose-1-phosphate isomerase (354 aa).

Substrate contacts are provided by residues 58-60, arginine 101, and glutamine 204; that span reads RGA. Residue aspartate 245 is the Proton donor of the active site. 255–256 is a substrate binding site; the sequence is NK.

This sequence belongs to the eIF-2B alpha/beta/delta subunits family. MtnA subfamily.

It catalyses the reaction 5-(methylsulfanyl)-alpha-D-ribose 1-phosphate = 5-(methylsulfanyl)-D-ribulose 1-phosphate. It participates in amino-acid biosynthesis; L-methionine biosynthesis via salvage pathway; L-methionine from S-methyl-5-thio-alpha-D-ribose 1-phosphate: step 1/6. Functionally, catalyzes the interconversion of methylthioribose-1-phosphate (MTR-1-P) into methylthioribulose-1-phosphate (MTRu-1-P). The protein is Methylthioribose-1-phosphate isomerase of Xylella fastidiosa (strain M12).